The primary structure comprises 4043 residues: Hybrid PKS-NRPS synthetase thnA (4043 aa).

A Ketosynthase family 3 (KS3) domain is found at 6 to 440; that stretch reads LEPIAIVGSA…GSNAHAILEE (435 aa). Active-site for beta-ketoacyl synthase activity residues include C179, H319, and H360. The malonyl-CoA:ACP transacylase (MAT) domain stretch occupies residues 558–894; the sequence is VFTGQGAQWA…FSDALGFVWT (337 aa). Residues 952–1090 form an N-terminal hotdog fold region; the sequence is HEILGTILPE…ATVKIILGTP (139 aa). The segment at 952–1256 is dehydratase (DH) domain; sequence HEILGTILPE…LSIKTFAPAT (305 aa). Positions 952–1258 constitute a PKS/mFAS DH domain; sequence HEILGTILPE…IKTFAPATQA (307 aa). The Proton acceptor; for dehydratase activity role is filled by H984. Residues 1105 to 1258 are C-terminal hotdog fold; the sequence is LFPIDADRFY…IKTFAPATQA (154 aa). The active-site Proton donor; for dehydratase activity is the D1166. Residues 1417 to 1591 form a methyltransferase (MT) domain region; it reads LASMMKQITH…RKAGFAGVDA (175 aa). Residues 2146 to 2320 are ketoreductase (KR) domain; the sequence is TYLLVGLTGK…GSTFDIGQVA (175 aa). Positions 2434 to 2512 constitute a Carrier 1 domain; sequence EQALDILKEC…ELCDRVVDKL (79 aa). Position 2472 is an O-(pantetheine 4'-phosphoryl)serine (S2472). Residues 2521 to 2618 are disordered; that stretch reads GKQGESQPPA…PPPPEPAVER (98 aa). Residues 2527-2536 show a composition bias toward low complexity; that stretch reads QPPASTAQPQ. Pro residues predominate over residues 2537 to 2547; sequence PVAPKPKPLPV. Polar residues predominate over residues 2578-2605; it reads YSATEASTRSGSPSEATRLSQKVSSKLQ. The segment at 2626–3067 is condensation (C) domain; that stretch reads IKSVPISLGQ…IPRFSEKQLA (442 aa). Residues 3092-3496 form an adenylation (A) domain region; it reads QVARENPDKV…GTMVFHSRMA (405 aa). The Carrier 2 domain maps to 3614–3695; it reads TELTETMIQL…EMAQKVEETI (82 aa). At S3655 the chain carries O-(pantetheine 4'-phosphoryl)serine. The segment at 3736–3954 is reductase (R) domain; it reads ITGATGFLSK…DMLPAVLTAQ (219 aa).

In the C-terminal section; belongs to the NRP synthetase family.

It catalyses the reaction malate + 6 malonyl-CoA + acetyl-CoA + 2 AH2 + 2 S-adenosyl-L-methionine + 5 NADPH + 9 H(+) = trihazone A + 2 A + 2 S-adenosyl-L-homocysteine + 6 CO2 + 5 NADP(+) + 7 CoA + 6 H2O. It functions in the pathway secondary metabolite biosynthesis. Hybrid PKS-NRPS synthetase; part of the gene cluster that produces the tetronate natural products trihazones. The PKS-NRPS synthetase thnA with the help of the trans-enoyl reductase thnE are responsible for the synthesis of the carboxylmethyl containing trihazone A. The PKS portion of thnA synthesizes beta-keto-triene chain from one acetyl-CoA and 6 equivalents of malonyl-CoA, in collaboration with thnE, which selectively reduces the enoyl intermediate during the first and fourth iteration of the PKS. The NRPS domain selects and activates malate, of which the alpha-hydroxyl group attacks the completed polyketide acyl-S-ACP chain to form the ester product. Intramolecular Dieckmann cyclization catalyzed by the terminal reductase domain releases the product as trihazone A from the PKS-NPRS. The pathway begins with the formation of trihazone A by the hybrid PKS-NRPS synthetase thnA and the trans-enoyl reductase thnE. Trihazone A is further decarboxylated by the 2-oxoglutarate-dependent dioxygenase thnC to produce trihazone D. The function of the FAD-dependent monooxygenase thnD has still to be identified. The protein is Hybrid PKS-NRPS synthetase thnA of Trichoderma harzianum (Hypocrea lixii).